Consider the following 274-residue polypeptide: MNKTAIALLALLASSASLAATPWQKITQPVPGSAQSIGSFSNGCIVGADTLPIQSEHYQVMRTDQRRYFGHPDLVMFIQRLSSQVSNLGMGTVLIGDMGMPAGGRFNGGHASHQTGLDVDIFLQLPKTRWTSAQLLRPQALDLVSRDGKHVVSTLWKPEIFSLIKLAAQDKDVTRIFVNPAIKQQLCLDAGTDRDWLRKVRPWFQHRAHMHVRLRCPADSLECEDQPLPPSGDGCGAELQSWFAPLKPGTTKPEKKTPPPLPPSCQALLDEHVI.

The signal sequence occupies residues 1-19; it reads MNKTAIALLALLASSASLA. 3 disulfide bridges follow: Cys-44/Cys-265, Cys-187/Cys-235, and Cys-216/Cys-223. The Zn(2+) site is built by His-110, His-113, Asp-120, Asp-147, His-150, and His-211.

The protein belongs to the peptidase M74 family. In terms of assembly, dimer. The cofactor is Zn(2+).

The protein localises to the periplasm. Its function is as follows. Murein endopeptidase that cleaves the D-alanyl-meso-2,6-diamino-pimelyl amide bond that connects peptidoglycan strands. Likely plays a role in the removal of murein from the sacculus. The sequence is that of Penicillin-insensitive murein endopeptidase from Shigella sonnei (strain Ss046).